We begin with the raw amino-acid sequence, 318 residues long: Ribosomal RNA small subunit methyltransferase H (318 aa).

S-adenosyl-L-methionine contacts are provided by residues 37 to 39, D57, F83, D104, and Q111; that span reads GGH.

Belongs to the methyltransferase superfamily. RsmH family.

It is found in the cytoplasm. It carries out the reaction cytidine(1402) in 16S rRNA + S-adenosyl-L-methionine = N(4)-methylcytidine(1402) in 16S rRNA + S-adenosyl-L-homocysteine + H(+). In terms of biological role, specifically methylates the N4 position of cytidine in position 1402 (C1402) of 16S rRNA. The protein is Ribosomal RNA small subunit methyltransferase H of Neisseria gonorrhoeae (strain NCCP11945).